The following is a 191-amino-acid chain: Calcium-binding protein CML42 (191 aa).

3 EF-hand domains span residues 25 to 60 (LNAL…LGLN), 116 to 151 (ENES…LGLP), and 154 to 189 (GEME…VVIP). Ca(2+) is bound by residues D38, N40, D42, E49, D129, N131, D133, E140, D167, N169, D171, R173, and E178.

In terms of assembly, interacts with KIC. Expressed in seedling shoots, roots, rosette leaves and flowers. Expressed in the leaf trichome support cells.

Probable calcium sensor that binds calcium in vitro. Involved in the regulation of trichome branching. In Arabidopsis thaliana (Mouse-ear cress), this protein is Calcium-binding protein CML42 (CML42).